The chain runs to 346 residues: Cell division protein ZipA (346 aa).

Topologically, residues 1–6 (MEDLQL) are periplasmic. Residues 7–27 (VLFVLGAIAIVAVLVHGFWSI) form a helical membrane-spanning segment. The Cytoplasmic portion of the chain corresponds to 28-346 (RRQQPKSLKD…DYLHRIRANA (319 aa)). 2 disordered regions span residues 76-103 (ANEA…QPVE) and 121-145 (QPDF…RQEP).

Belongs to the ZipA family. Interacts with FtsZ via their C-terminal domains.

Its subcellular location is the cell inner membrane. In terms of biological role, essential cell division protein that stabilizes the FtsZ protofilaments by cross-linking them and that serves as a cytoplasmic membrane anchor for the Z ring. Also required for the recruitment to the septal ring of downstream cell division proteins. This Shewanella sp. (strain MR-7) protein is Cell division protein ZipA.